Consider the following 1057-residue polypeptide: Collagen alpha-1(I) chain (1057 aa).

At Gln-1 the chain carries Pyrrolidone carboxylic acid. Residues 1–10 (QLSYGYDEKS) show a composition bias toward basic and acidic residues. A nonhelical region (N-terminal) region spans residues 1-17 (QLSYGYDEKSAGGISVP). Residues 1-1057 (QLSYGYDEKS…AHDGGRYYRA (1057 aa)) form a disordered region. Lys-9 carries the allysine modification. Position 10 is a phosphoserine (Ser-10). Collagen-like domains follow at residues 18-76 (GPMG…EAGK), 75-134 (GKPG…PGEN), 135-193 (GAPG…AKGE), and 195-252 (GPQG…GFPG). Positions 18 to 1031 (GPMGPSGPRG…PGPPGPPGPP (1014 aa)) are triple-helical region. Residues Pro-29, Pro-32, Pro-35, Pro-44, Pro-47, Pro-50, Pro-65, Pro-80, Pro-86, Pro-95, and Pro-101 each carry the 4-hydroxyproline modification. Residues 37–56 (PQGFQGPPGEPGEPGASGPM) show a composition bias toward low complexity. Positions 68 to 82 (NGDDGEAGKPGRPGE) are enriched in basic and acidic residues. The residue at position 104 (Lys-104) is a 5-hydroxylysine; alternate. Lys-104 carries O-linked (Gal...) hydroxylysine; alternate glycosylation. Phosphoserine is present on Ser-110. A compositionally biased stretch (low complexity) spans 118-134 (DAGPAGPKGEPGSPGEN). 4-hydroxyproline occurs at positions 128, 131, 137, 146, and 152. The span at 157–170 (PAGARGNDGATGAA) shows a compositional bias: low complexity. Residues 172–184 (PPGPTGPAGPPGF) are compositionally biased toward pro residues. A 4-hydroxyproline mark is found at Pro-173, Pro-182, Pro-185, Pro-212, Pro-215, Pro-227, Pro-233, Pro-242, Pro-248, Pro-251, and Pro-266. Positions 218–269 (AGAAGPAGNPGADGQPGAKGANGAPGIAGAPGFPGARGPAGPQGPSGAPGPK) are enriched in low complexity. Residue Lys-269 is modified to 5-hydroxylysine. A 4-hydroxyproline mark is found at Pro-275, Pro-278, Pro-290, Pro-292, Pro-299, Pro-314, Pro-320, Pro-323, Pro-329, and Pro-335. Over residues 287 to 296 (KGEPGPIGIQ) the composition is skewed to low complexity. Positions 324–333 (GERGGPGSRG) are enriched in gly residues. At Lys-344 the chain carries 5-hydroxylysine. 28 positions are modified to 4-hydroxyproline: Pro-353, Pro-362, Pro-368, Pro-374, Pro-383, Pro-386, Pro-395, Pro-404, Pro-410, Pro-422, Pro-431, Pro-440, Pro-443, Pro-461, Pro-479, Pro-485, Pro-491, Pro-497, Pro-503, Pro-509, Pro-521, Pro-530, Pro-542, Pro-554, Pro-557, Pro-563, Pro-569, and Pro-578. Residues 377–403 (KGLTGSPGSPGPDGKTGPPGPAGQDGR) are compositionally biased toward low complexity. A compositionally biased stretch (low complexity) spans 412-431 (ARGQAGVMGFPGPKGAAGEP). Positions 473-500 (QGPAGSPGFQGLPGPAGPPGEAGKPGEQ) are enriched in low complexity. 2 consecutive Collagen-like domains span residues 522–579 (GERG…GLPG) and 555–613 (GAPG…PPGP). Residues 539-566 (NGAPGNDGAKGDAGAPGAPGSQGAPGLQ) show a composition bias toward low complexity. The residue at position 590 (Lys-590) is a 5-hydroxylysine. Pro-596, Pro-611, and Pro-617 each carry 4-hydroxyproline. Collagen-like domains follow at residues 618 to 676 (GDKG…AKGD) and 678 to 736 (GPPG…PPGP). A compositionally biased stretch (low complexity) spans 623–637 (AGPSGPAGPTGARGA). Ser-626 carries the phosphoserine modification. A 4-hydroxyproline mark is found at Pro-638, Pro-644, Pro-647, Pro-656, Pro-662, Pro-680, Pro-689, and Pro-698. Over residues 650-677 (AGFAGPPGADGQPGAKGEPGDAGAKGDA) the composition is skewed to low complexity. A 5-hydroxylysine modification is found at Lys-701. Low complexity predominate over residues 706–722 (SAGPPGATGFPGAAGRV). 2 positions are modified to 4-hydroxyproline: Pro-710 and Pro-716. Residue Pro-724 is modified to 3-hydroxyproline. A 4-hydroxyproline mark is found at Pro-725, Pro-734, Pro-737, Pro-758, Pro-764, Pro-767, Pro-776, and Pro-785. Low complexity predominate over residues 751 to 760 (ETGPAGRPGE). Residues 770 to 785 (AGEKGSPGADGPAGAP) are compositionally biased toward low complexity. Over residues 789 to 798 (GPQGIGGQRG) the composition is skewed to gly residues. Residues Pro-803, Pro-812, Pro-815, Pro-821, Pro-836, Pro-842, Pro-848, Pro-857, Pro-863, and Pro-869 each carry the 4-hydroxyproline modification. The region spanning 804–861 (GQRGERGFPGLPGPSGEPGKQGPSGSSGERGPPGPAGPPGLAGPPGESGREGAPGAEG) is the Collagen-like 9 domain. Residues 835–845 (PPGPAGPPGLA) are compositionally biased toward pro residues. At Lys-872 the chain carries 5-hydroxylysine. Pro residues predominate over residues 881–896 (SGPPGAPGAPGAPGPV). 4-hydroxyproline occurs at positions 884, 887, and 890. Over residues 917–931 (AGPAGVRGPAGPQGP) the composition is skewed to low complexity. Collagen-like domains lie at 918–976 (GPAG…ASGP) and 972–1030 (GASG…PPGP). The span at 932 to 946 (RGDKGETGEQGDRGL) shows a compositional bias: basic and acidic residues. At Lys-935 the chain carries 5-hydroxylysine. A 5-hydroxylysine; alternate modification is found at Lys-947. Lys-947 is a glycosylation site (O-linked (Gal...) hydroxylysine; alternate). 4-hydroxyproline occurs at positions 959, 962, 965, 983, 998, and 1001. The segment covering 965-997 (PGEQGPSGASGPAGPRGPPGSAGAPGKDGLNGL) has biased composition (low complexity). Pro-1003 bears the 3-hydroxyproline mark. The residue at position 1004 (Pro-1004) is a 4-hydroxyproline. Pro residues predominate over residues 1016–1031 (VGPPGPPGPPGPPGPP). A 3-hydroxyproline modification is found at Pro-1018. Pro-1019 is modified (4-hydroxyproline). 3-hydroxyproline is present on Pro-1021. Pro-1022 is subject to 4-hydroxyproline. Residue Pro-1024 is modified to 3-hydroxyproline. 3 positions are modified to 4-hydroxyproline: Pro-1025, Pro-1028, and Pro-1031. The segment at 1032 to 1055 (SGAFDFSFLPQPPQEKAHDGGRYY) is nonhelical region (C-terminal). Residues 1046–1057 (EKAHDGGRYYRA) show a composition bias toward basic and acidic residues. At Lys-1047 the chain carries Allysine.

The protein belongs to the fibrillar collagen family. Trimers of one alpha 2(I) and two alpha 1(I) chains. Post-translationally, contains mostly 4-hydroxyproline. Proline residues at the third position of the tripeptide repeating unit (G-X-Y) are hydroxylated in some or all of the chains. In terms of processing, contains 3-hydroxyproline at a few sites. This modification occurs on the first proline residue in the sequence motif Gly-Pro-Hyp, where Hyp is 4-hydroxyproline. Lysine residues at the third position of the tripeptide repeating unit (G-X-Y) are 5-hydroxylated in some or all of the chains. Post-translationally, O-glycosylated on hydroxylated lysine residues. The O-linked glycan consists of a Glc-Gal disaccharide.

It is found in the secreted. The protein localises to the extracellular space. The protein resides in the extracellular matrix. Functionally, type I collagen is a member of group I collagen (fibrillar forming collagen). The chain is Collagen alpha-1(I) chain (COL1A1) from Mammut americanum (American mastodon).